The primary structure comprises 264 residues: Apolipoprotein A-I (264 aa).

Residues 1 to 18 (MRGVLVTLAVLFLTGTQA) form the signal peptide. A run of 2 repeats spans residues 67–88 (LKLADNLDTLSAAAAKLREDMT) and 89–110 (PYYREVREMWLKDTEALRAELT). Positions 67–264 (LKLADNLDTL…LLDEVQKTMA (198 aa)) are 10 X approximate tandem repeats. A 3; half-length repeat occupies 111–121 (KDLEEVKEKIR). A run of 5 repeats spans residues 122–143 (PFLDQFSAKWTEEVEQYRQRLA), 144–165 (PVAQELKDLTKQKVELMQAKLT), 166–187 (PVAEEVRDRLREQVEELRKNLA), 188–209 (PYSSELRQKLSQKLEEIRERGI), and 210–231 (PQASEYQAKVVEQLSNLREKMT). The stretch at 232 to 242 (PLVQEFKERLT) is one 9; half-length repeat. Repeat 10 spans residues 243-264 (PYAENLKNRLIDLLDEVQKTMA).

The protein belongs to the apolipoprotein A1/A4/E family. As to expression, major protein of VLDL, HDL, LDL and in chylomicrons. Expressed in a number of tissues including liver, small intestine, lung, kidney, heart and muscle with highest expression in liver and small intestine.

The protein localises to the secreted. Functionally, participates in the reverse transport of cholesterol from tissues to the liver for excretion by promoting cholesterol efflux from tissues and by acting as a cofactor for the lecithin cholesterol acyltransferase (LCAT). The polypeptide is Apolipoprotein A-I (APOA1) (Coturnix japonica (Japanese quail)).